The sequence spans 223 residues: Thiamine-phosphate synthase (223 aa).

4-amino-2-methyl-5-(diphosphooxymethyl)pyrimidine is bound by residues 37–41 and Asn-69; that span reads QLREK. Mg(2+) is bound by residues Asp-70 and Asp-89. Ser-108 lines the 4-amino-2-methyl-5-(diphosphooxymethyl)pyrimidine pocket. Residue 134 to 136 participates in 2-[(2R,5Z)-2-carboxy-4-methylthiazol-5(2H)-ylidene]ethyl phosphate binding; sequence TGT. Residue Lys-137 coordinates 4-amino-2-methyl-5-(diphosphooxymethyl)pyrimidine. 2-[(2R,5Z)-2-carboxy-4-methylthiazol-5(2H)-ylidene]ethyl phosphate-binding positions include Gly-167 and 187–188; that span reads VS. Positions 197-223 are disordered; that stretch reads AAATRKLQGSVDTASVESQLPSEEPSA. The segment covering 206 to 217 has biased composition (polar residues); the sequence is SVDTASVESQLP.

This sequence belongs to the thiamine-phosphate synthase family. Mg(2+) is required as a cofactor.

The catalysed reaction is 2-[(2R,5Z)-2-carboxy-4-methylthiazol-5(2H)-ylidene]ethyl phosphate + 4-amino-2-methyl-5-(diphosphooxymethyl)pyrimidine + 2 H(+) = thiamine phosphate + CO2 + diphosphate. The enzyme catalyses 2-(2-carboxy-4-methylthiazol-5-yl)ethyl phosphate + 4-amino-2-methyl-5-(diphosphooxymethyl)pyrimidine + 2 H(+) = thiamine phosphate + CO2 + diphosphate. It carries out the reaction 4-methyl-5-(2-phosphooxyethyl)-thiazole + 4-amino-2-methyl-5-(diphosphooxymethyl)pyrimidine + H(+) = thiamine phosphate + diphosphate. It participates in cofactor biosynthesis; thiamine diphosphate biosynthesis; thiamine phosphate from 4-amino-2-methyl-5-diphosphomethylpyrimidine and 4-methyl-5-(2-phosphoethyl)-thiazole: step 1/1. In terms of biological role, condenses 4-methyl-5-(beta-hydroxyethyl)thiazole monophosphate (THZ-P) and 2-methyl-4-amino-5-hydroxymethyl pyrimidine pyrophosphate (HMP-PP) to form thiamine monophosphate (TMP). This chain is Thiamine-phosphate synthase, found in Haloquadratum walsbyi (strain DSM 16790 / HBSQ001).